A 526-amino-acid chain; its full sequence is MSEELKYELPGLERKAHECESTRPEGPGDATKPDELATTASVYGKLMASAAKLKATFAAGDREGKRIAAAIRAAAGAYQKIEEQKAAELNRQMNGSDAPPPAAEAVVPDMSGIPGPLTIPSMEYPSAAAAADEMDWEAAARIIHSGDTQALSMKYFRDQWRDYQSTLEGHGRHFANPAEGWSGAAAETCAEAQRRLSTWWADMGAECGRLAQEATTFVDAHDKLVANHPTMDDVKAFEEAEWESEWDRQYAWAIKQEKSEDALEAYANGSQIQEIRPGKPPSIGGLPAVNDGDVQATPTSTTGGPGGPGSGSGGGSGGGASGGSGGGTPEMPELPSTDPSMSPMSTNSAGEEQSSGSPSSGGSSSGGSPSGGSPSGGGAPSSGGMPEGGLPTDMPGGPDIPGLDDPSLKPASAGGGGGGGVGGGGGGGMPAAPLGPAVGADSVSPSPSSTRGGGVGVPTGTGGGAGGMMGGGMGGMGAGHGQGQGKEKKRDPKLAPDEDLYTEDRAHSEGVIGHRPRREKDSGKQQ.

Positions 1–23 are enriched in basic and acidic residues; the sequence is MSEELKYELPGLERKAHECESTR. Disordered stretches follow at residues 1-35, 91-110, and 271-526; these read MSEE…KPDE, RQMN…VPDM, and QIQE…GKQQ. The segment covering 303–328 has biased composition (gly residues); that stretch reads GGPGGPGSGSGGGSGGGASGGSGGGT. Low complexity predominate over residues 335–362; it reads PSTDPSMSPMSTNSAGEEQSSGSPSSGG. Gly residues predominate over residues 363-387; sequence SSSGGSPSGGSPSGGGAPSSGGMPE. The segment covering 393–405 has biased composition (low complexity); that stretch reads DMPGGPDIPGLDD. The segment covering 413–429 has biased composition (gly residues); that stretch reads AGGGGGGGVGGGGGGGM. The segment covering 430–440 has biased composition (low complexity); the sequence is PAAPLGPAVGA. Residues 451–484 are compositionally biased toward gly residues; it reads RGGGVGVPTGTGGGAGGMMGGGMGGMGAGHGQGQ. Residues 485–508 are compositionally biased toward basic and acidic residues; it reads GKEKKRDPKLAPDEDLYTEDRAHS.

The protein belongs to the EspB family.

The protein resides in the secreted. Its function is as follows. Involved in DNA conjugation, at least in the recipient strain. The chain is ESX-1 secretion-associated protein EspB from Mycolicibacterium smegmatis (strain MKD8) (Mycobacterium smegmatis).